A 528-amino-acid polypeptide reads, in one-letter code: UDP-glucuronosyltransferase 2A1 (528 aa).

Positions 1–21 are cleaved as a signal peptide; that stretch reads MLKNILLCSLQISLLGMSLGG. Over 22-494 the chain is Extracellular; the sequence is NVLIWPMEGS…FQYHSLDVIG (473 aa). An N-linked (GlcNAc...) asparagine glycan is attached at N49. At K135 the chain carries N6-succinyllysine. A glycan (N-linked (GlcNAc...) asparagine) is linked at N314. The helical transmembrane segment at 495–515 threads the bilayer; the sequence is FLLACVASAILLVAKCCLFIF. Topologically, residues 516–528 are cytoplasmic; the sequence is QKVGKTGKKKKRD.

It belongs to the UDP-glycosyltransferase family.

The protein localises to the membrane. The catalysed reaction is glucuronate acceptor + UDP-alpha-D-glucuronate = acceptor beta-D-glucuronoside + UDP + H(+). It catalyses the reaction 16beta,17beta-estriol + UDP-alpha-D-glucuronate = 16beta,17beta-estriol 16-O-(beta-D-glucuronate) + UDP + H(+). The enzyme catalyses 16alpha,17alpha-estriol + UDP-alpha-D-glucuronate = 16alpha,17alpha-estriol 16-O-(beta-D-glucuronate) + UDP + H(+). It carries out the reaction 17alpha-estradiol + UDP-alpha-D-glucuronate = 17alpha-estradiol 17-O-(beta-D-glucuronate) + UDP + H(+). The catalysed reaction is 17alpha-estradiol + UDP-alpha-D-glucuronate = 17alpha-estradiol 3-O-(beta-D-glucuronate) + UDP + H(+). It catalyses the reaction 17beta-estradiol + UDP-alpha-D-glucuronate = 17beta-estradiol 3-O-(beta-D-glucuronate) + UDP + H(+). The enzyme catalyses 17beta-estradiol + UDP-alpha-D-glucuronate = 17beta-estradiol 17-O-(beta-D-glucuronate) + UDP + H(+). It carries out the reaction testosterone + UDP-alpha-D-glucuronate = testosterone 17-O-(beta-D-glucuronate) + UDP + H(+). The catalysed reaction is epitestosterone + UDP-alpha-D-glucuronate = epitestosterone 17-O-(beta-D-glucuronate) + UDP + H(+). It catalyses the reaction lithocholate + UDP-alpha-D-glucuronate = lithocholoyl-3-O-(beta-D-glucuronate) + UDP + H(+). The enzyme catalyses lithocholate + UDP-alpha-D-glucuronate = lithocholoyl-24-O-(beta-D-glucuronate) + UDP. It carries out the reaction deoxycholate + UDP-alpha-D-glucuronate = deoxycholoyl-24-O-(beta-D-glucuronate) + UDP. The catalysed reaction is hyodeoxycholate + UDP-alpha-D-glucuronate = hyodeoxycholate 6-O-(beta-D-glucuronate) + UDP + H(+). It catalyses the reaction hyocholate + UDP-alpha-D-glucuronate = hyocholoyl-24-O-(beta-D-glucuronate) + UDP. In terms of biological role, UDP-glucuronosyltransferase (UGT) that catalyzes phase II biotransformation reactions in which lipophilic substrates are conjugated with glucuronic acid to increase the metabolite's water solubility, thereby facilitating excretion into either the urine or bile. Essential for the elimination and detoxification of drugs, xenobiotics and endogenous compounds. Catalyzes the glucuronidation of endogenous steroid hormones such as androgens (testosterones) and estrogens (estradiol and estriol). Contributes to bile acid (BA) detoxification by catalyzing the glucuronidation of BA substrates, which are natural detergents for dietary lipids absorption. Shows a high affinity to aliphatic odorants such as citronellol as well as olfactory tissue specificity, and therefore may be involved in olfaction. In Mus musculus (Mouse), this protein is UDP-glucuronosyltransferase 2A1.